The chain runs to 85 residues: Large ribosomal subunit protein bL27 (85 aa).

A disordered region spans residues 1-21 (MAHKKAGGSSRNGRDSEAKRL).

It belongs to the bacterial ribosomal protein bL27 family.

This is Large ribosomal subunit protein bL27 from Aeromonas hydrophila subsp. hydrophila (strain ATCC 7966 / DSM 30187 / BCRC 13018 / CCUG 14551 / JCM 1027 / KCTC 2358 / NCIMB 9240 / NCTC 8049).